Reading from the N-terminus, the 505-residue chain is MVHLASIVSDLGFWPTVAGTVATYLFYQIVATVYDVYFGPMSNIPGPKLWAASHIPYILMLWNGEDASTKLALHEKYGPVVRVSPTELSYREAQAWKDIYGHQTRGKKSFPKDSRFYAPAVNGAPSILNADDPTHTRHRRILAHAFSDKALKEQEPLLKKWSDMLVSKLKENVEKSPSTPLDLVSWFNFTTFDIMADLTFAEPLYMLEGSTYSPWVRTIFGSLKLGSRLRAVRILPGMTTFINMIMPNSMRQKQVEHFKYSADRVDKRLANKNLDRPDLWAQVLKRVDVDGMSMSVAEMHSNSAIFMLAGTETTATLLSGLTYHLLQNPATMSKLVNEVRSTFPTRDDINVETLQRLPYLNACLEEGMRMYPPVATGLPRLTPKGGAAICGTWIPEDVAVSVSQWSTYQCEENFHKAKLFIPERWMGEDEQFANDNHAAFQPFSTGPRNCIGRNLAYHEARLLLCEVLWNFDLTLDEKSEDWLNQPVFTVWEKDPLWVRLQVASR.

The helical transmembrane segment at 12–34 threads the bilayer; it reads GFWPTVAGTVATYLFYQIVATVY. Cys-450 contributes to the heme binding site.

This sequence belongs to the cytochrome P450 family. Requires heme as cofactor.

It localises to the membrane. It functions in the pathway secondary metabolite biosynthesis; terpenoid biosynthesis. Cytochrome P450 monooxygenase; part of the gene cluster that mediates the biosynthesis of enfumafungin, a glycosylated fernene-type triterpenoid with potent antifungal activity, mediated by its interaction with beta-1,3-glucan synthase and the fungal cell wall. The pathway begins with the terpene cyclase-glycosyl transferase fusion protein that most likely uses 2,3-oxidosqualene as substrate and catalyzes glycosylation immediately after cyclization. The fernene glycoside then could be processed by the desaturase efuI which catalyzes isomerization of a double bond established by efuA to form the core structure. The latter would then undergo a series of hydroxylations in unknown order at C-2, C-19, C-23 and C-25, which would be catalyzed by two of the three cytochrome P450 monooxygenases efuB, efuG or efuH. The hydroxy-group at C-25 becomes oxidized by the dehydrogenase efuE to enable a spontaneous, non-enzymatic hemiacetal formation with C-23. After hydroxylation at C-2, acetylation by the acetyltransferase efuC takes place. The final steps in enfumafungin biosynthesis require expansion of the 5-membered ring by lactonization via a Baeyer-Villiger reaction mediated by one of the BGC's cytochrome P450 monooxygenases (efuB, efuG or efuH) followed by ring cleavage. This type of reaction would establish a double bond between C-20 and C-21 which could be reduced by the reductase efuL to form the final product. This Hormonema carpetanum protein is Cytochrome P450 monooxygenase efuB.